A 340-amino-acid polypeptide reads, in one-letter code: Glucokinase (340 aa).

17 to 22 (GDIGGT) is a binding site for ATP.

The protein belongs to the bacterial glucokinase family.

It is found in the cytoplasm. The enzyme catalyses D-glucose + ATP = D-glucose 6-phosphate + ADP + H(+). The chain is Glucokinase from Allorhizobium ampelinum (strain ATCC BAA-846 / DSM 112012 / S4) (Agrobacterium vitis (strain S4)).